Consider the following 1578-residue polypeptide: Pentafunctional AROM polypeptide (1578 aa).

A 3-dehydroquinate synthase region spans residues 1 to 393; it reads MSVELAKVSI…YGTSAHVVSD (393 aa). NAD(+) contacts are provided by residues 44–46, 79–82, 110–112, and aspartate 115; these read DTN, EAHK, and GGV. Position 126 (arginine 126) interacts with 7-phospho-2-dehydro-3-deoxy-D-arabino-heptonate. An NAD(+)-binding site is contributed by 135-136; that stretch reads TS. The 7-phospho-2-dehydro-3-deoxy-D-arabino-heptonate site is built by aspartate 142 and lysine 148. Lysine 157 serves as a coordination point for NAD(+). Asparagine 158 is a 7-phospho-2-dehydro-3-deoxy-D-arabino-heptonate binding site. NAD(+) is bound by residues 175 to 178 and asparagine 186; that span reads WLET. Glutamate 190 is a Zn(2+) binding site. 7-phospho-2-dehydro-3-deoxy-D-arabino-heptonate contacts are provided by residues 190–193 and lysine 259; that span reads EVIK. Glutamate 269 (proton acceptor; for 3-dehydroquinate synthase activity) is an active-site residue. Residues 273–277 and histidine 280 contribute to the 7-phospho-2-dehydro-3-deoxy-D-arabino-heptonate site; that span reads RNLLN. Histidine 280 is a binding site for Zn(2+). Catalysis depends on histidine 284, which acts as the Proton acceptor; for 3-dehydroquinate synthase activity. Residues histidine 296 and lysine 365 each coordinate 7-phospho-2-dehydro-3-deoxy-D-arabino-heptonate. Residue histidine 296 participates in Zn(2+) binding. Positions 406–863 are EPSP synthase; the sequence is VHPFNNIPEG…WDVLHSQLGA (458 aa). Cysteine 845 acts as the For EPSP synthase activity in catalysis. The tract at residues 882 to 1071 is shikimate kinase; the sequence is VVIIGMRAAG…VPSRRSAFVC (190 aa). 886–893 contributes to the ATP binding site; sequence GMRAAGKS. Residues 1072–1284 are 3-dehydroquinase; the sequence is LTFEDLSDHL…AAPGQLTLAE (213 aa). Histidine 1189 acts as the Proton acceptor; for 3-dehydroquinate dehydratase activity in catalysis. Catalysis depends on lysine 1218, which acts as the Schiff-base intermediate with substrate; for 3-dehydroquinate dehydratase activity. The interval 1297-1578 is shikimate dehydrogenase; sequence AKKFFVIGSP…KAIFDAVTQE (282 aa).

It in the N-terminal section; belongs to the sugar phosphate cyclases superfamily. Dehydroquinate synthase family. The protein in the 2nd section; belongs to the EPSP synthase family. In the 3rd section; belongs to the shikimate kinase family. This sequence in the 4th section; belongs to the type-I 3-dehydroquinase family. It in the C-terminal section; belongs to the shikimate dehydrogenase family. In terms of assembly, homodimer. Requires Zn(2+) as cofactor.

Its subcellular location is the cytoplasm. The catalysed reaction is 7-phospho-2-dehydro-3-deoxy-D-arabino-heptonate = 3-dehydroquinate + phosphate. The enzyme catalyses 3-dehydroquinate = 3-dehydroshikimate + H2O. It catalyses the reaction shikimate + NADP(+) = 3-dehydroshikimate + NADPH + H(+). It carries out the reaction shikimate + ATP = 3-phosphoshikimate + ADP + H(+). The catalysed reaction is 3-phosphoshikimate + phosphoenolpyruvate = 5-O-(1-carboxyvinyl)-3-phosphoshikimate + phosphate. It participates in metabolic intermediate biosynthesis; chorismate biosynthesis; chorismate from D-erythrose 4-phosphate and phosphoenolpyruvate: step 2/7. Its pathway is metabolic intermediate biosynthesis; chorismate biosynthesis; chorismate from D-erythrose 4-phosphate and phosphoenolpyruvate: step 3/7. It functions in the pathway metabolic intermediate biosynthesis; chorismate biosynthesis; chorismate from D-erythrose 4-phosphate and phosphoenolpyruvate: step 4/7. The protein operates within metabolic intermediate biosynthesis; chorismate biosynthesis; chorismate from D-erythrose 4-phosphate and phosphoenolpyruvate: step 5/7. It participates in metabolic intermediate biosynthesis; chorismate biosynthesis; chorismate from D-erythrose 4-phosphate and phosphoenolpyruvate: step 6/7. The AROM polypeptide catalyzes 5 consecutive enzymatic reactions in prechorismate polyaromatic amino acid biosynthesis. This Kluyveromyces lactis (strain ATCC 8585 / CBS 2359 / DSM 70799 / NBRC 1267 / NRRL Y-1140 / WM37) (Yeast) protein is Pentafunctional AROM polypeptide.